A 394-amino-acid polypeptide reads, in one-letter code: Chorismate synthase (394 aa).

Positions 40 and 46 each coordinate NADP(+). FMN is bound by residues 135–137, 255–256, Gly302, 317–321, and Arg343; these read RAS, QA, and KPISS.

Belongs to the chorismate synthase family. Homotetramer. Requires FMNH2 as cofactor.

It catalyses the reaction 5-O-(1-carboxyvinyl)-3-phosphoshikimate = chorismate + phosphate. The protein operates within metabolic intermediate biosynthesis; chorismate biosynthesis; chorismate from D-erythrose 4-phosphate and phosphoenolpyruvate: step 7/7. Functionally, catalyzes the anti-1,4-elimination of the C-3 phosphate and the C-6 proR hydrogen from 5-enolpyruvylshikimate-3-phosphate (EPSP) to yield chorismate, which is the branch point compound that serves as the starting substrate for the three terminal pathways of aromatic amino acid biosynthesis. This reaction introduces a second double bond into the aromatic ring system. The polypeptide is Chorismate synthase (Frankia alni (strain DSM 45986 / CECT 9034 / ACN14a)).